The chain runs to 484 residues: tRNA sulfurtransferase (484 aa).

Positions 63–167 (EAFAERLACI…NDNLYLIDKR (105 aa)) constitute a THUMP domain. Residues 185-186 (LI), Lys267, Gly289, and Gln298 each bind ATP. An intrachain disulfide couples Cys346 to Cys458. In terms of domain architecture, Rhodanese spans 406-484 (ISAGEIIIDV…GYNNVKVYRP (79 aa)). The active-site Cysteine persulfide intermediate is Cys458.

This sequence belongs to the ThiI family.

The protein localises to the cytoplasm. It carries out the reaction [ThiI sulfur-carrier protein]-S-sulfanyl-L-cysteine + a uridine in tRNA + 2 reduced [2Fe-2S]-[ferredoxin] + ATP + H(+) = [ThiI sulfur-carrier protein]-L-cysteine + a 4-thiouridine in tRNA + 2 oxidized [2Fe-2S]-[ferredoxin] + AMP + diphosphate. It catalyses the reaction [ThiS sulfur-carrier protein]-C-terminal Gly-Gly-AMP + S-sulfanyl-L-cysteinyl-[cysteine desulfurase] + AH2 = [ThiS sulfur-carrier protein]-C-terminal-Gly-aminoethanethioate + L-cysteinyl-[cysteine desulfurase] + A + AMP + 2 H(+). It functions in the pathway cofactor biosynthesis; thiamine diphosphate biosynthesis. Functionally, catalyzes the ATP-dependent transfer of a sulfur to tRNA to produce 4-thiouridine in position 8 of tRNAs, which functions as a near-UV photosensor. Also catalyzes the transfer of sulfur to the sulfur carrier protein ThiS, forming ThiS-thiocarboxylate. This is a step in the synthesis of thiazole, in the thiamine biosynthesis pathway. The sulfur is donated as persulfide by IscS. This chain is tRNA sulfurtransferase, found in Shewanella pealeana (strain ATCC 700345 / ANG-SQ1).